We begin with the raw amino-acid sequence, 193 residues long: Acyl carrier protein phosphodiesterase (193 aa).

It belongs to the AcpH family.

The enzyme catalyses holo-[ACP] + H2O = apo-[ACP] + (R)-4'-phosphopantetheine + H(+). Functionally, converts holo-ACP to apo-ACP by hydrolytic cleavage of the phosphopantetheine prosthetic group from ACP. The protein is Acyl carrier protein phosphodiesterase of Salmonella paratyphi A (strain ATCC 9150 / SARB42).